A 308-amino-acid chain; its full sequence is UDP-N-acetylenolpyruvoylglucosamine reductase (308 aa).

The FAD-binding PCMH-type domain maps to 32 to 197 (QTGGKADYYL…LEAAFTLAPG (166 aa)). Residue Arg176 is part of the active site. Ser226 acts as the Proton donor in catalysis. The active site involves Glu296.

It belongs to the MurB family. FAD is required as a cofactor.

The protein resides in the cytoplasm. It catalyses the reaction UDP-N-acetyl-alpha-D-muramate + NADP(+) = UDP-N-acetyl-3-O-(1-carboxyvinyl)-alpha-D-glucosamine + NADPH + H(+). The protein operates within cell wall biogenesis; peptidoglycan biosynthesis. Functionally, cell wall formation. The sequence is that of UDP-N-acetylenolpyruvoylglucosamine reductase from Staphylococcus saprophyticus subsp. saprophyticus (strain ATCC 15305 / DSM 20229 / NCIMB 8711 / NCTC 7292 / S-41).